The following is a 332-amino-acid chain: tRNA N6-adenosine threonylcarbamoyltransferase (332 aa).

Positions 108 and 112 each coordinate Fe cation. Residues 129 to 133 (LISGG), Asp161, Glu178, and Ser258 contribute to the substrate site. Position 286 (Asp286) interacts with Fe cation.

This sequence belongs to the KAE1 / TsaD family. Fe(2+) is required as a cofactor.

The protein localises to the cytoplasm. It catalyses the reaction L-threonylcarbamoyladenylate + adenosine(37) in tRNA = N(6)-L-threonylcarbamoyladenosine(37) in tRNA + AMP + H(+). Functionally, required for the formation of a threonylcarbamoyl group on adenosine at position 37 (t(6)A37) in tRNAs that read codons beginning with adenine. Is probably involved in the transfer of the threonylcarbamoyl moiety of threonylcarbamoyl-AMP (TC-AMP) to the N6 group of A37. The polypeptide is tRNA N6-adenosine threonylcarbamoyltransferase (Pyrobaculum arsenaticum (strain DSM 13514 / JCM 11321 / PZ6)).